Reading from the N-terminus, the 868-residue chain is Monofunctional pimaradiene synthase (868 aa).

Mg(2+) is bound by residues D620, D624, N764, T768, and E772.

Belongs to the terpene synthase family. Tpsd subfamily. Requires Mg(2+) as cofactor.

It catalyses the reaction (+)-copalyl diphosphate = (-)-pimara-8(14),15-diene + diphosphate. Its pathway is terpene metabolism; oleoresin biosynthesis. Functionally, involved in defensive oleoresin formation in conifers in response to insect attack or other injury. Involved in diterpene (C20) olefins biosynthesis. Monofunctional enzyme lacking the DXDD motif in the class II active site relevant for the cyclization of geranylgeranyl diphosphate (GGPP). Requires (+)-copalyl diphosphate ((+)-CPP) as substrate, but no activity with GGPP or ent-CPP. Pimaradiene is the major products of the enzyme. This is Monofunctional pimaradiene synthase from Pinus banksiana (Jack pine).